Reading from the N-terminus, the 76-residue chain is Heat shock factor-binding protein 1 (76 aa).

Belongs to the HSBP1 family. In terms of assembly, homohexamer. Associates with heptad repeats of HSF1 trimers and probably also HSF1 monomers, and with HSP70. Association with HSF1 trimers and HSP70 coincides with attenuation of heat shock response and the conversion of HSF1 trimer to monomer.

The protein resides in the nucleus. In terms of biological role, negative regulator of the heat shock response. Negatively affects HSF1 DNA-binding activity. May have a role in the suppression of the activation of the stress response during the aging process. This is Heat shock factor-binding protein 1 (HSBP1) from Bos taurus (Bovine).